The following is a 194-amino-acid chain: HTH-type transcriptional regulator BetI (194 aa).

In terms of domain architecture, HTH tetR-type spans 8–68 (EIRRAQLIDA…ATMRHVLRDL (61 aa)). A DNA-binding region (H-T-H motif) is located at residues 31–50 (TLASVAQRANISTGIVSHYF).

It functions in the pathway amine and polyamine biosynthesis; betaine biosynthesis via choline pathway [regulation]. Its function is as follows. Repressor involved in the biosynthesis of the osmoprotectant glycine betaine. It represses transcription of the choline transporter BetT and the genes of BetAB involved in the synthesis of glycine betaine. This Burkholderia cenocepacia (strain ATCC BAA-245 / DSM 16553 / LMG 16656 / NCTC 13227 / J2315 / CF5610) (Burkholderia cepacia (strain J2315)) protein is HTH-type transcriptional regulator BetI.